The following is an 83-amino-acid chain: U25-theraphotoxin-Cg1b (83 aa).

The N-terminal stretch at 1-23 (MRFHTLLFLSFLLLVSCALICTA) is a signal peptide. The propeptide occupies 24 to 48 (QHPGLEKSGMFHENVGKGQHIEEKR). 3 disulfides stabilise this stretch: Cys-50–Cys-66, Cys-57–Cys-71, and Cys-65–Cys-79.

The protein belongs to the neurotoxin 07 (Beta/delta-agtx) family. 03 (aga-4) subfamily. JZTX sub-subfamily. As to expression, expressed by the venom gland.

It localises to the secreted. Its function is as follows. Probable ion channel inhibitor. This Chilobrachys guangxiensis (Chinese earth tiger tarantula) protein is U25-theraphotoxin-Cg1b.